The chain runs to 1550 residues: Protein TIME FOR COFFEE (1550 aa).

Disordered stretches follow at residues 1–191 (MDRN…PVSP), 207–304 (VPRK…PVAV), 325–505 (TSKQ…SERG), 708–736 (QGSV…TAQR), 779–805 (RPPN…SATP), 859–1023 (FNGS…KAGV), 1086–1130 (ASLE…QSIA), 1163–1196 (ALPQ…SQQP), 1213–1296 (AASA…SVAA), and 1321–1435 (NSKP…PKHG). The segment covering 43-80 (EAARLRDRGGSNKKDRDRERDRDRERERERDRERDRLN) has biased composition (basic and acidic residues). The span at 100–118 (DGGDDSSEESVNDDEEYDD) shows a compositional bias: acidic residues. Positions 134–151 (SNNISAASFSSSLSNHHN) are enriched in low complexity. A compositionally biased stretch (basic residues) spans 157 to 171 (LHHHHHSHNNNHQRK). Polar residues predominate over residues 241–250 (RQISSTSPAN). Residues 292-301 (KSSSSKLSSP) show a composition bias toward low complexity. Polar residues predominate over residues 348–366 (RVSSPISNPQTLPQSSITL). Over residues 367-379 (AANSSSSNVSAIA) the composition is skewed to low complexity. The segment covering 409–432 (SKSQVPFSNQLKSSGSGEGNSSVL) has biased composition (polar residues). Basic and acidic residues-rich tracts occupy residues 447 to 461 (DSEK…DETI) and 473 to 490 (SDGE…KFEI). 3 stretches are compositionally biased toward polar residues: residues 713–736 (GRSS…TAQR), 783–803 (SGIT…SASA), and 884–992 (LTGQ…NLGL). Over residues 1112-1126 (SGGGAIGKTSGGNGG) the composition is skewed to gly residues. Residues 1164-1173 (LPQSSGSLPT) show a composition bias toward polar residues. Positions 1174–1195 (SHHQQLLQQQQQQHMQRSQSQQ) are enriched in low complexity. Over residues 1234–1253 (NMTTSPAGTTKFANANSGFP) the composition is skewed to polar residues. Residues 1254–1273 (QNLVQSSSNQVQSQQWKNNS) show a composition bias toward low complexity. 3 stretches are compositionally biased toward polar residues: residues 1274–1296 (PRTT…SVAA), 1321–1342 (NSKP…NHQA), and 1351–1360 (SPSTSSVSKN). A compositionally biased stretch (low complexity) spans 1361–1382 (ASGSPRTTASASSAANKGGQAS). Polar residues-rich tracts occupy residues 1383-1397 (TTTH…NLQP) and 1405-1419 (GGRN…NPTT). The segment covering 1420–1435 (SSGSKSQQQQQLPKHG) has biased composition (low complexity).

Interacts with MYC2.

It is found in the nucleus. In terms of biological role, regulator of normal clock function. Acts in the mid to late night. Contributes to the amplitude of circadian clocks. May act on the transcriptional induction of LATE ELONGATED HYPOCOTYL (LHY). Inhibits MYC2 protein accumulation, acting as a negative factor in the JA-signaling pathway. This Arabidopsis thaliana (Mouse-ear cress) protein is Protein TIME FOR COFFEE (TIC).